The primary structure comprises 457 residues: Paired box protein Pax-8 (457 aa).

A DNA-binding region (paired) is located at residues 9 to 135; it reads GHGGLNQLGG…SSINRIIRTK (127 aa). Positions 12-68 are PAI subdomain; the sequence is GLNQLGGAFVNGRPLPEVVRQRIVDLAHQGVRPCDISRQLRVSHGCVSKILGRYYET. Residues 87-135 are RED subdomain; that stretch reads KVVEKIGDYKRQNPTMFAWEIRDRLLAEGVCDNDTVPSVSSINRIIRTK. Residues 159–182 are compositionally biased toward polar residues; sequence LIPSSAVTPPESPQSDSLGSTYSI. Positions 159-226 are disordered; that stretch reads LIPSSAVTPP…SSGPRKHLRT (68 aa). Ser304 carries the post-translational modification Phosphoserine.

Interacts with WWTR1.

Its subcellular location is the nucleus. Functionally, thought to encode a transcription factor. It may have a role in kidney cell differentiation. May play a regulatory role in mammalian development. This chain is Paired box protein Pax-8 (Pax8), found in Rattus norvegicus (Rat).